Consider the following 394-residue polypeptide: 1-deoxy-D-xylulose 5-phosphate reductoisomerase (394 aa).

7 residues coordinate NADPH: threonine 13, glycine 14, serine 15, valine 16, arginine 40, glutamine 41, and asparagine 127. Residue lysine 128 coordinates 1-deoxy-D-xylulose 5-phosphate. Glutamate 129 serves as a coordination point for NADPH. Residue aspartate 153 participates in Mn(2+) binding. Positions 154, 155, 184, and 207 each coordinate 1-deoxy-D-xylulose 5-phosphate. Glutamate 155 provides a ligand contact to Mn(2+). Residue glycine 213 participates in NADPH binding. 1-deoxy-D-xylulose 5-phosphate contacts are provided by serine 220, asparagine 225, lysine 226, and glutamate 229. Glutamate 229 is a Mn(2+) binding site.

It belongs to the DXR family. It depends on Mg(2+) as a cofactor. Requires Mn(2+) as cofactor.

The catalysed reaction is 2-C-methyl-D-erythritol 4-phosphate + NADP(+) = 1-deoxy-D-xylulose 5-phosphate + NADPH + H(+). Its pathway is isoprenoid biosynthesis; isopentenyl diphosphate biosynthesis via DXP pathway; isopentenyl diphosphate from 1-deoxy-D-xylulose 5-phosphate: step 1/6. Its function is as follows. Catalyzes the NADPH-dependent rearrangement and reduction of 1-deoxy-D-xylulose-5-phosphate (DXP) to 2-C-methyl-D-erythritol 4-phosphate (MEP). The sequence is that of 1-deoxy-D-xylulose 5-phosphate reductoisomerase from Chromobacterium violaceum (strain ATCC 12472 / DSM 30191 / JCM 1249 / CCUG 213 / NBRC 12614 / NCIMB 9131 / NCTC 9757 / MK).